The primary structure comprises 536 residues: DEAD-box ATP-dependent RNA helicase 41 (536 aa).

A compositionally biased stretch (basic and acidic residues) spans 1-10; the sequence is MEQEENHSAD. The tract at residues 1–25 is disordered; sequence MEQEENHSADHLSAQPGNGNELEES. Residues 40-69 form an HIT-type zinc finger; the sequence is GEPRCVICGRYGEYICDQTDDDICSVECKT. Positions 137 to 165 match the Q motif motif; that stretch reads MCFSSSGLPEKLVLNLEAAGYVMPTPVQM. One can recognise a Helicase ATP-binding domain in the interval 168 to 344; it reads IPSSICNRSL…NSLAKNAIHI (177 aa). Position 181–188 (181–188) interacts with ATP; that stretch reads ADTGSGKT. Positions 293 to 296 match the DEAD box motif; sequence DEVD. The Helicase C-terminal domain occupies 355–518; the sequence is SVKQVVIWVE…PIPRELANSK (164 aa).

This sequence belongs to the DEAD box helicase family. DDX59 subfamily.

The enzyme catalyses ATP + H2O = ADP + phosphate + H(+). In Oryza sativa subsp. japonica (Rice), this protein is DEAD-box ATP-dependent RNA helicase 41.